The chain runs to 510 residues: Nectin-4 (510 aa).

An N-terminal signal peptide occupies residues 1–31 (MPLSLGAEMWGPAAWLLLLLLLASFTGQRLA). The Ig-like V-type domain occupies 32–144 (GELETSDLVT…GSFQARLRLR (113 aa)). At 32–349 (GELETSDLVT…GKQVDLVSAS (318 aa)) the chain is on the extracellular side. 3 disulfide bridges follow: Cys-52–Cys-127, Cys-171–Cys-223, and Cys-270–Cys-315. Ig-like C2-type domains follow at residues 148-237 (PPLP…QRIT) and 248-331 (ASVR…VVVD). Residue Asn-281 is glycosylated (N-linked (GlcNAc...) asparagine). Residues 350 to 370 (VVVVGVIAALLFCLLVVVVVL) traverse the membrane as a helical segment. Residues 371–510 (MSRYHRRKAQ…IYINGRGHLV (140 aa)) lie on the Cytoplasmic side of the membrane. Over residues 400–412 (RLHSHHSDPRNQP) the composition is skewed to basic and acidic residues. A disordered region spans residues 400 to 475 (RLHSHHSDPR…GRAEEEEDRD (76 aa)).

Belongs to the nectin family. As to quaternary structure, self-associates. Interacts via its Ig-like V-type domain with NECTIN1 Ig-like V-type domain. Interacts via its C-terminus with AFDN. Interacts with TIGIT.

Its subcellular location is the cell membrane. It is found in the cell junction. The protein localises to the adherens junction. Its function is as follows. Seems to be involved in cell adhesion through trans-homophilic and -heterophilic interactions, the latter including specifically interactions with NECTIN1. Plays a role in the senescence-associated cell size enlargement via SFK/PI3K/Rac1 and thus promotes senescent cell survival. Also participates in the innate immune response by acting as a ligand for the receptor TIGIT to inhibit NK-cell activity. The sequence is that of Nectin-4 from Bos taurus (Bovine).